An 81-amino-acid chain; its full sequence is Conotoxin Cl9.6 (81 aa).

The first 20 residues, 1–20 (MSTLGMTLLILLLLLPLATP), serve as a signal peptide directing secretion. Residues 21 to 40 (DDVGQPPKRDTLRNLLKIGT) constitute a propeptide that is removed on maturation. Intrachain disulfides connect Cys46–Cys69, Cys54–Cys76, and Cys60–Cys78.

Expressed by the venom duct.

The protein resides in the secreted. This chain is Conotoxin Cl9.6, found in Californiconus californicus (California cone).